Here is a 204-residue protein sequence, read N- to C-terminus: Urease accessory protein UreG (204 aa).

12–19 (GPVGSGKT) lines the GTP pocket.

This sequence belongs to the SIMIBI class G3E GTPase family. UreG subfamily. In terms of assembly, homodimer. UreD, UreF and UreG form a complex that acts as a GTP-hydrolysis-dependent molecular chaperone, activating the urease apoprotein by helping to assemble the nickel containing metallocenter of UreC. The UreE protein probably delivers the nickel.

Its subcellular location is the cytoplasm. In terms of biological role, facilitates the functional incorporation of the urease nickel metallocenter. This process requires GTP hydrolysis, probably effectuated by UreG. In Streptococcus salivarius (strain 57.I), this protein is Urease accessory protein UreG.